The primary structure comprises 279 residues: Proteasome subunit beta (279 aa).

A propeptide spans 1 to 51 (MTFDASGRLPEAFLTPGGSSFMDFLAGHAPDLLPGRRSLGTGDLSKDVPHG) (removed in mature form; by autocatalysis). Residue threonine 52 is the Nucleophile of the active site.

This sequence belongs to the peptidase T1B family. The 20S proteasome core is composed of 14 alpha and 14 beta subunits that assemble into four stacked heptameric rings, resulting in a barrel-shaped structure. The two inner rings, each composed of seven catalytic beta subunits, are sandwiched by two outer rings, each composed of seven alpha subunits. The catalytic chamber with the active sites is on the inside of the barrel. Has a gated structure, the ends of the cylinder being occluded by the N-termini of the alpha-subunits. Is capped by the proteasome-associated ATPase, ARC.

Its subcellular location is the cytoplasm. The enzyme catalyses Cleavage of peptide bonds with very broad specificity.. The protein operates within protein degradation; proteasomal Pup-dependent pathway. Its activity is regulated as follows. The formation of the proteasomal ATPase ARC-20S proteasome complex, likely via the docking of the C-termini of ARC into the intersubunit pockets in the alpha-rings, may trigger opening of the gate for substrate entry. Interconversion between the open-gate and close-gate conformations leads to a dynamic regulation of the 20S proteasome proteolysis activity. In terms of biological role, component of the proteasome core, a large protease complex with broad specificity involved in protein degradation. The sequence is that of Proteasome subunit beta from Kribbella flavida (strain DSM 17836 / JCM 10339 / NBRC 14399).